The sequence spans 343 residues: Thymidine kinase (343 aa).

27–34 (GAYGIGKS) is an ATP binding site. Glu-56 acts as the Proton acceptor in catalysis. Positions 74 and 98 each coordinate substrate. Arg-188 lines the ATP pocket. Arg-194 contributes to the substrate binding site.

The protein belongs to the herpesviridae thymidine kinase family. In terms of assembly, homodimer.

It carries out the reaction thymidine + ATP = dTMP + ADP + H(+). Functionally, catalyzes the transfer of the gamma-phospho group of ATP to thymidine to generate dTMP in the salvage pathway of pyrimidine synthesis. The dTMP serves as a substrate for DNA polymerase during viral DNA replication. Allows the virus to be reactivated and to grow in non-proliferative cells lacking a high concentration of phosphorylated nucleic acid precursors. The sequence is that of Thymidine kinase from Felidae (cat family).